Reading from the N-terminus, the 208-residue chain is Large ribosomal subunit protein bL25 (208 aa).

The disordered stretch occupies residues 188-208 (AVETETEEETTTGESPAQPAE).

It belongs to the bacterial ribosomal protein bL25 family. CTC subfamily. In terms of assembly, part of the 50S ribosomal subunit; part of the 5S rRNA/L5/L18/L25 subcomplex. Contacts the 5S rRNA. Binds to the 5S rRNA independently of L5 and L18.

In terms of biological role, this is one of the proteins that binds to the 5S RNA in the ribosome where it forms part of the central protuberance. This is Large ribosomal subunit protein bL25 from Moorella thermoacetica (strain ATCC 39073 / JCM 9320).